The chain runs to 290 residues: D-tagatose 3-epimerase (290 aa).

Cys66 contacts substrate. The Proton donor/acceptor role is filled by Glu152. Glu152 contacts Mn(2+). Substrate-binding positions include Glu158 and 185–188 (DTFH). Asp185 and His211 together coordinate Mn(2+). Arg217 provides a ligand contact to substrate. Glu246 acts as the Proton donor/acceptor in catalysis. Mn(2+) is bound at residue Glu246.

The protein belongs to the hyi family. Homodimer. Mn(2+) is required as a cofactor.

The catalysed reaction is keto-D-tagatose = keto-D-sorbose. The enzyme catalyses D-allulose = keto-D-fructose. It carries out the reaction D-ribulose = D-xylulose. Its activity is regulated as follows. Strongly inhibited (about 90% of the enzyme activity) by Ag(+), Hg(2+) and p-chloromercuribenzoic acid. Cu(2+) and Zn(2+) inhibit about 60% of the enzyme activity. Its function is as follows. Catalyzes the epimerization of various ketoses at the C(3) position. It is able to interconvert D-tagatose and D-ribulose to D-sorbose and D-xylulose, respectively. The enzyme is also able to accept other ketopentoses such as D-psicose with lower efficiency. This is D-tagatose 3-epimerase from Pseudomonas cichorii.